Consider the following 859-residue polypeptide: Paladin (859 aa).

The disordered stretch occupies residues 1 to 34 (MGTTASTAQQTVSAGTSLEGLQGGSSSSMDSQHS). The N-myristoyl glycine moiety is linked to residue glycine 2. At serine 89 the chain carries Phosphoserine.

This sequence belongs to the paladin family. Vascular expression detected in the central nervous system, kidney, lung, heart, skeletal muscle, white adipose tissue (WAT), brown adipose tissue, liver, pancreas and spleen. Not expressed in all vessels: for instance, not expressed in capillaries in the brain, and expressed mainly in large vessels in the heart, WAT, liver, pancreas and kidney. Predominant nonvascular expression in myocardium and lung mesenchyme. In large vessels, primarily expressed by smooth muscle cells, but occasionally detected at low levels in the endothelium. Expressed in various cells of the hematopoietic lineage.

It localises to the cytoplasm. The protein localises to the cytosol. The sequence is that of Paladin (Pald1) from Mus musculus (Mouse).